Here is a 380-residue protein sequence, read N- to C-terminus: Alcohol dehydrogenase 3 (380 aa).

Positions 48, 50, 70, 100, 103, 106, 114, and 178 each coordinate Zn(2+). An alcohol-binding residues include T50 and H70. T50 provides a ligand contact to NAD(+). NAD(+) contacts are provided by residues 203-208 (GLGAVG), D227, R232, T273, V296, 296-298 (VGV), F323, and R373.

This sequence belongs to the zinc-containing alcohol dehydrogenase family. In terms of assembly, homodimer. Homotetramer. Requires Zn(2+) as cofactor.

The protein resides in the cytoplasm. It carries out the reaction a primary alcohol + NAD(+) = an aldehyde + NADH + H(+). The enzyme catalyses a secondary alcohol + NAD(+) = a ketone + NADH + H(+). This chain is Alcohol dehydrogenase 3 (ADH3), found in Solanum tuberosum (Potato).